A 607-amino-acid chain; its full sequence is Phosphomethylpyrimidine synthase (607 aa).

Substrate is bound by residues asparagine 216, methionine 245, tyrosine 274, histidine 310, 330-332, 371-374, and glutamate 410; these read SRG and DGLR. Histidine 414 is a binding site for Zn(2+). A substrate-binding site is contributed by tyrosine 437. Histidine 478 lines the Zn(2+) pocket. Positions 558, 561, and 566 each coordinate [4Fe-4S] cluster.

This sequence belongs to the ThiC family. Homodimer. [4Fe-4S] cluster serves as cofactor.

The enzyme catalyses 5-amino-1-(5-phospho-beta-D-ribosyl)imidazole + S-adenosyl-L-methionine = 4-amino-2-methyl-5-(phosphooxymethyl)pyrimidine + CO + 5'-deoxyadenosine + formate + L-methionine + 3 H(+). It participates in cofactor biosynthesis; thiamine diphosphate biosynthesis. Catalyzes the synthesis of the hydroxymethylpyrimidine phosphate (HMP-P) moiety of thiamine from aminoimidazole ribotide (AIR) in a radical S-adenosyl-L-methionine (SAM)-dependent reaction. The chain is Phosphomethylpyrimidine synthase from Agrobacterium fabrum (strain C58 / ATCC 33970) (Agrobacterium tumefaciens (strain C58)).